The sequence spans 360 residues: Ankyrin repeat domain-containing protein 2 (360 aa).

The segment at 5–120 (PSWAGVGALA…GIQNLIELRK (116 aa)) is may mediate interaction with PML, p53/TP53 and YBX1. S99 bears the Phosphoserine; by PKB/AKT2 mark. The interval 126–147 (KRDALAASHEPPPEPEEITGPV) is disordered. Positions 138 to 147 (PEPEEITGPV) are enriched in acidic residues. 5 ANK repeats span residues 147 to 176 (VDEE…SADT), 180 to 209 (FRRT…TVDF), 213 to 242 (LDCT…DTNV), 246 to 275 (LLST…EINA), and 279 to 308 (EGDT…DMMT). Residues 330 to 342 (ALEHPEPGAEHNG) show a composition bias toward basic and acidic residues. Residues 330 to 360 (ALEHPEPGAEHNGLEGPNDSGRETPQPVPAQ) are disordered.

In terms of assembly, interacts with ID3; both proteins cooperate in myoblast differentiation. Interacts with TTN/titin. Interacts (via ANK repeats) with TCAP; the interaction is direct. Interacts with TJP1 (via PDZ domains). Interacts with PML; the interaction is direct. Interacts with p53/TP53. Interacts with YBX1. Interacts with AKT2. Post-translationally, phosphorylation at Ser-99 by PKB/AKT2 in response to oxidative stress induces translocation to the nucleus and negatively regulates myoblast differentiation. Mostly expressed in skeletal and cardiac muscles. Found in slow fibers. Also expressed in kidney, but to a lower extent (at protein level).

Its subcellular location is the cytoplasm. The protein localises to the myofibril. It localises to the sarcomere. It is found in the i band. The protein resides in the cytosol. Its subcellular location is the nucleus. The protein localises to the PML body. Functions as a negative regulator of myocyte differentiation. May interact with both sarcoplasmic structural proteins and nuclear proteins to regulate gene expression during muscle development and in response to muscle stress. In Homo sapiens (Human), this protein is Ankyrin repeat domain-containing protein 2 (ANKRD2).